The following is a 170-amino-acid chain: tRNA-splicing endonuclease (170 aa).

Active-site residues include Y106, H116, and K147.

It belongs to the tRNA-intron endonuclease family. Archaeal short subfamily. As to quaternary structure, homotetramer; although the tetramer contains four active sites, only two participate in the cleavage. Therefore, it should be considered as a dimer of dimers.

It catalyses the reaction pretRNA = a 3'-half-tRNA molecule with a 5'-OH end + a 5'-half-tRNA molecule with a 2',3'-cyclic phosphate end + an intron with a 2',3'-cyclic phosphate and a 5'-hydroxyl terminus.. In terms of biological role, endonuclease that removes tRNA introns. Cleaves pre-tRNA at the 5'- and 3'-splice sites to release the intron. The products are an intron and two tRNA half-molecules bearing 2',3' cyclic phosphate and 5'-OH termini. Recognizes a pseudosymmetric substrate in which 2 bulged loops of 3 bases are separated by a stem of 4 bp. This chain is tRNA-splicing endonuclease, found in Methanothermobacter thermautotrophicus (strain ATCC 29096 / DSM 1053 / JCM 10044 / NBRC 100330 / Delta H) (Methanobacterium thermoautotrophicum).